We begin with the raw amino-acid sequence, 131 residues long: uncharacterized protein (131 aa).

The span at Ala-31 to Leu-40 shows a compositional bias: low complexity. Residues Ala-31–Pro-131 are disordered.

This is an uncharacterized protein from Homo sapiens (Human).